The sequence spans 2278 residues: Protein Ycf2 (2278 aa).

1632–1639 is a binding site for ATP; that stretch reads GSIGTGRS.

Belongs to the Ycf2 family.

The protein localises to the plastid. It localises to the chloroplast stroma. Its function is as follows. Probable ATPase of unknown function. Its presence in a non-photosynthetic plant (Epifagus virginiana) and experiments in tobacco indicate that it has an essential function which is probably not related to photosynthesis. The chain is Protein Ycf2 from Solanum tuberosum (Potato).